A 555-amino-acid polypeptide reads, in one-letter code: DNA ligase (555 aa).

E247 provides a ligand contact to ATP. The active-site N6-AMP-lysine intermediate is the K249. ATP is bound by residues R254, R269, E298, F337, R411, and K417.

It belongs to the ATP-dependent DNA ligase family. Requires Mg(2+) as cofactor.

The enzyme catalyses ATP + (deoxyribonucleotide)n-3'-hydroxyl + 5'-phospho-(deoxyribonucleotide)m = (deoxyribonucleotide)n+m + AMP + diphosphate.. Functionally, DNA ligase that seals nicks in double-stranded DNA during DNA replication, DNA recombination and DNA repair. In Archaeoglobus fulgidus (strain ATCC 49558 / DSM 4304 / JCM 9628 / NBRC 100126 / VC-16), this protein is DNA ligase.